Reading from the N-terminus, the 280-residue chain is MVVATMLGGMWVASRYLRAGLAGDAAIERAAVPPAQLALALLGTVLVVSGANALNMYIERDTDLLMERTRSRPLPARRLSPELALWFGIALSAASIPVLLVGVNATTGVLAAAALLSYVLVYTPLKRRTTLSLPIGAIPGAIPPLLGWTSVTGQIDAPGFLLFAVMFLWQIPHFLAISLFRQDEYQRAGLKVLPLEKGDLTTRRHIVGYLALLVLSSVLFVPLGVAGPVYLGAAILLGGAFFGLGVYGLRAGTGARWARQVFFASMVYLVLLFAALMIGA.

The next 9 membrane-spanning stretches (helical) occupy residues 2-21, 30-50, 83-103, 105-125, 131-151, 160-180, 206-226, 229-249, and 260-280; these read VVAT…RAGL, AAVP…VVSG, LALW…LVGV, ATTG…YTPL, LSLP…WTSV, FLLF…ISLF, IVGY…LGVA, VYLG…VYGL, and QVFF…MIGA.

The protein belongs to the UbiA prenyltransferase family. Protoheme IX farnesyltransferase subfamily.

The protein localises to the cell inner membrane. The enzyme catalyses heme b + (2E,6E)-farnesyl diphosphate + H2O = Fe(II)-heme o + diphosphate. It functions in the pathway porphyrin-containing compound metabolism; heme O biosynthesis; heme O from protoheme: step 1/1. In terms of biological role, converts heme B (protoheme IX) to heme O by substitution of the vinyl group on carbon 2 of heme B porphyrin ring with a hydroxyethyl farnesyl side group. The polypeptide is Protoheme IX farnesyltransferase (Sorangium cellulosum (strain So ce56) (Polyangium cellulosum (strain So ce56))).